Consider the following 254-residue polypeptide: Imidazole glycerol phosphate synthase subunit HisF (254 aa).

Residues Asp12 and Asp131 contribute to the active site.

Belongs to the HisA/HisF family. In terms of assembly, heterodimer of HisH and HisF.

The protein localises to the cytoplasm. The enzyme catalyses 5-[(5-phospho-1-deoxy-D-ribulos-1-ylimino)methylamino]-1-(5-phospho-beta-D-ribosyl)imidazole-4-carboxamide + L-glutamine = D-erythro-1-(imidazol-4-yl)glycerol 3-phosphate + 5-amino-1-(5-phospho-beta-D-ribosyl)imidazole-4-carboxamide + L-glutamate + H(+). It participates in amino-acid biosynthesis; L-histidine biosynthesis; L-histidine from 5-phospho-alpha-D-ribose 1-diphosphate: step 5/9. In terms of biological role, IGPS catalyzes the conversion of PRFAR and glutamine to IGP, AICAR and glutamate. The HisF subunit catalyzes the cyclization activity that produces IGP and AICAR from PRFAR using the ammonia provided by the HisH subunit. The polypeptide is Imidazole glycerol phosphate synthase subunit HisF (Janthinobacterium sp. (strain Marseille) (Minibacterium massiliensis)).